The sequence spans 144 residues: Peptide methionine sulfoxide reductase MsrB (144 aa).

The region spanning 5–128 (QEELRQRIGH…NSAALDFIPY (124 aa)) is the MsrB domain. Cysteine 117 serves as the catalytic Nucleophile.

This sequence belongs to the MsrB Met sulfoxide reductase family.

It carries out the reaction L-methionyl-[protein] + [thioredoxin]-disulfide + H2O = L-methionyl-(R)-S-oxide-[protein] + [thioredoxin]-dithiol. This chain is Peptide methionine sulfoxide reductase MsrB, found in Streptococcus agalactiae serotype Ia (strain ATCC 27591 / A909 / CDC SS700).